A 351-amino-acid polypeptide reads, in one-letter code: sn-glycerol-3-phosphate import ATP-binding protein UgpC (351 aa).

Residues 4 to 234 enclose the ABC transporter domain; that stretch reads ITLDNLVKAY…PATTFVAGFI (231 aa). Position 36–43 (36–43) interacts with ATP; sequence GPSGCGKS.

Belongs to the ABC transporter superfamily. sn-glycerol-3-phosphate importer (TC 3.A.1.1.3) family. As to quaternary structure, the complex is composed of two ATP-binding proteins (UgpC), two transmembrane proteins (UgpA and UgpE) and a solute-binding protein (UgpB).

The protein resides in the cell inner membrane. It catalyses the reaction sn-glycerol 3-phosphate(out) + ATP + H2O = sn-glycerol 3-phosphate(in) + ADP + phosphate + H(+). Functionally, part of the ABC transporter complex UgpBAEC involved in sn-glycerol-3-phosphate (G3P) import. Responsible for energy coupling to the transport system. In Ruegeria pomeroyi (strain ATCC 700808 / DSM 15171 / DSS-3) (Silicibacter pomeroyi), this protein is sn-glycerol-3-phosphate import ATP-binding protein UgpC.